The following is a 362-amino-acid chain: Protein RecA (362 aa).

67–74 (GPESSGKT) lines the ATP pocket. Low complexity predominate over residues 337 to 356 (VADAPADSAPAPVAAVAPKA). The segment at 337–362 (VADAPADSAPAPVAAVAPKASARKSA) is disordered.

Belongs to the RecA family.

It localises to the cytoplasm. Functionally, can catalyze the hydrolysis of ATP in the presence of single-stranded DNA, the ATP-dependent uptake of single-stranded DNA by duplex DNA, and the ATP-dependent hybridization of homologous single-stranded DNAs. It interacts with LexA causing its activation and leading to its autocatalytic cleavage. The chain is Protein RecA from Clavibacter michiganensis subsp. michiganensis (strain NCPPB 382).